The primary structure comprises 898 residues: Dipeptidyl peptidase 8 (898 aa).

Residues Ser755, Asp833, and His865 each act as charge relay system in the active site.

The protein belongs to the peptidase S9B family. DPPIV subfamily. In terms of assembly, homodimer. Forms a ternary complex with NLRP1, composed of a DPP8 homodimer, one full-length NLRP1 protein, and one cleaved C-terminus of NLRP1 (NACHT, LRR and PYD domains-containing protein 1, C-terminus). Forms a ternary complex with CARD8, composed of a DPP8 homodimer, one full-length NLRP1 protein, and one cleaved C-terminus of CARD8 (Caspase recruitment domain-containing protein 8, C-terminus). In the ternary complex, only one subunit of the DPP8 homodimer is bound to NLRP1 or CARD8. In terms of tissue distribution, ubiquitously expressed, with highest levels in testis, placenta, prostate, muscle and brain.

It localises to the cytoplasm. It carries out the reaction Release of an N-terminal dipeptide, Xaa-Yaa-|-Zaa-, from a polypeptide, preferentially when Yaa is Pro, provided Zaa is neither Pro nor hydroxyproline.. Inhibited by zinc. Inhibited by the serine proteinase inhibitor 4-(2-aminoethyl)benzenesulphonyl fluoride (AEBSF), and by di-isopropylfluorophosphate. Specifically inhibited by isoindoline derivatives. Inhibited by Val-boroPro (Talabostat, PT-100), a non-selective inhibitor, which triggers pyroptosis in monocytes and macrophages. Functionally, dipeptidyl peptidase that cleaves off N-terminal dipeptides from proteins having a Pro or Ala residue at position 2. Acts as a key inhibitor of caspase-1-dependent monocyte and macrophage pyroptosis in resting cells by preventing activation of NLRP1 and CARD8. Sequesters the cleaved C-terminal part of NLRP1 and CARD8, which respectively constitute the active part of the NLRP1 and CARD8 inflammasomes, in a ternary complex, thereby preventing their oligomerization and activation. The dipeptidyl peptidase activity is required to suppress NLRP1 and CARD8; however, neither NLRP1 nor CARD8 are bona fide substrates of DPP8, suggesting the existence of substrate(s) required for NLRP1 and CARD8 inhibition. The polypeptide is Dipeptidyl peptidase 8 (Homo sapiens (Human)).